A 334-amino-acid polypeptide reads, in one-letter code: Protein-methionine-sulfoxide reductase catalytic subunit MsrP (334 aa).

Residues 1–44 constitute a signal peptide (tat-type signal); the sequence is MKKNQFLKESDVTAESVFFMKRRQVLKALGISAAALSLPHAAHA. Mo-molybdopterin is bound by residues Asn88, 91–92, Cys146, Thr181, Asn233, Arg238, and 249–251; these read YE and GIK.

The protein belongs to the MsrP family. In terms of assembly, heterodimer of a catalytic subunit (MsrP) and a heme-binding subunit (MsrQ). Requires Mo-molybdopterin as cofactor. In terms of processing, predicted to be exported by the Tat system. The position of the signal peptide cleavage has not been experimentally proven.

Its subcellular location is the periplasm. The catalysed reaction is L-methionyl-[protein] + a quinone + H2O = L-methionyl-(S)-S-oxide-[protein] + a quinol. It catalyses the reaction L-methionyl-[protein] + a quinone + H2O = L-methionyl-(R)-S-oxide-[protein] + a quinol. In terms of biological role, part of the MsrPQ system that repairs oxidized periplasmic proteins containing methionine sulfoxide residues (Met-O), using respiratory chain electrons. Thus protects these proteins from oxidative-stress damage caused by reactive species of oxygen and chlorine generated by the host defense mechanisms. MsrPQ is essential for the maintenance of envelope integrity under bleach stress, rescuing a wide series of structurally unrelated periplasmic proteins from methionine oxidation, including the primary periplasmic chaperone SurA and the lipoprotein Pal. The catalytic subunit MsrP is non-stereospecific, being able to reduce both (R-) and (S-) diastereoisomers of methionine sulfoxide. This Escherichia coli (strain UTI89 / UPEC) protein is Protein-methionine-sulfoxide reductase catalytic subunit MsrP.